Consider the following 333-residue polypeptide: Glyceraldehyde-3-phosphate dehydrogenase (333 aa).

Residues 11 to 12 (RI), Asp-35, and Thr-121 each bind NAD(+). D-glyceraldehyde 3-phosphate contacts are provided by residues 151–153 (SCT) and Thr-182. Catalysis depends on Cys-152, which acts as the Nucleophile. Position 183 (Asn-183) interacts with NAD(+). D-glyceraldehyde 3-phosphate-binding positions include Arg-197, 210-211 (TG), and Arg-233. Asn-315 lines the NAD(+) pocket.

The protein belongs to the glyceraldehyde-3-phosphate dehydrogenase family. As to quaternary structure, homotetramer.

The protein resides in the cytoplasm. The catalysed reaction is D-glyceraldehyde 3-phosphate + phosphate + NAD(+) = (2R)-3-phospho-glyceroyl phosphate + NADH + H(+). It functions in the pathway carbohydrate degradation; glycolysis; pyruvate from D-glyceraldehyde 3-phosphate: step 1/5. In terms of biological role, catalyzes the oxidative phosphorylation of glyceraldehyde 3-phosphate (G3P) to 1,3-bisphosphoglycerate (BPG) using the cofactor NAD. The first reaction step involves the formation of a hemiacetal intermediate between G3P and a cysteine residue, and this hemiacetal intermediate is then oxidized to a thioester, with concomitant reduction of NAD to NADH. The reduced NADH is then exchanged with the second NAD, and the thioester is attacked by a nucleophilic inorganic phosphate to produce BPG. This chain is Glyceraldehyde-3-phosphate dehydrogenase (gap), found in Thermotoga maritima (strain ATCC 43589 / DSM 3109 / JCM 10099 / NBRC 100826 / MSB8).